The chain runs to 252 residues: MRNLEKINELLEIFGHFDVNFAKTMEEKIDTQYFVLENLKNSMNNDEMFIKLVILNSIVSYQLCTTGELWWEEFSKYWSKHDANNENLGESYVNFLENSKGNKRLLNVKIKRIERITPFLENLNLLDFKTYYSDMEKLLENLSKYLNSKKNSKTVVFAVKMFGYASRIVFNEFFPYPMNIEIPKDSRIEKYTLKFTDENPIKFWNEVSKTAKIPPLHIDSIIWPVLGRNFDFKSCENKLDENFRYLLKLTEL.

8-oxoguanine is bound by residues Q32, S60, and W71. Residues 129 to 193 (KTYYSDMEKL…KDSRIEKYTL (65 aa)) are helix-hairpin-helix. Residue K153 is the Schiff-base intermediate with DNA of the active site. 8-oxoguanine-binding residues include F157 and P183. D185 is an active-site residue. 8-oxoguanine-binding residues include D219 and W223.

Belongs to the archaeal N-glycosylase/DNA lyase (AGOG) family.

It carries out the reaction 2'-deoxyribonucleotide-(2'-deoxyribose 5'-phosphate)-2'-deoxyribonucleotide-DNA = a 3'-end 2'-deoxyribonucleotide-(2,3-dehydro-2,3-deoxyribose 5'-phosphate)-DNA + a 5'-end 5'-phospho-2'-deoxyribonucleoside-DNA + H(+). DNA repair enzyme that is part of the base excision repair (BER) pathway; protects from oxidative damage by removing the major product of DNA oxidation, 8-oxoguanine (GO), from single- and double-stranded DNA substrates. In Methanococcus maripaludis (strain DSM 14266 / JCM 13030 / NBRC 101832 / S2 / LL), this protein is N-glycosylase/DNA lyase.